A 242-amino-acid chain; its full sequence is uncharacterized protein (242 aa).

NADP(+) is bound at residue 8–15 (TGASGGIG). Position 137 (Ser-137) interacts with substrate. The active-site Proton acceptor is the Tyr-150.

This sequence belongs to the short-chain dehydrogenases/reductases (SDR) family.

This is an uncharacterized protein from Bacillus subtilis (strain 168).